The sequence spans 178 residues: Large ribosomal subunit protein uL13m (178 aa).

It belongs to the universal ribosomal protein uL13 family. Component of the mitochondrial ribosome large subunit (39S) which comprises a 16S rRNA and about 50 distinct proteins. Interacts with OXA1L.

The protein resides in the mitochondrion. This chain is Large ribosomal subunit protein uL13m (MRPL13), found in Bos taurus (Bovine).